The following is a 262-amino-acid chain: Ornithine carbamoyltransferase (262 aa).

Carbamoyl phosphate-binding positions include 3-7 (STRTR), glutamine 30, arginine 54, and 81-84 (HPTQ). L-ornithine is bound by residues asparagine 114, aspartate 178, and 182–183 (SM). Carbamoyl phosphate is bound by residues 219–222 (HCLP) and threonine 247.

Belongs to the aspartate/ornithine carbamoyltransferase superfamily. OTCase family.

The protein resides in the cytoplasm. It carries out the reaction carbamoyl phosphate + L-ornithine = L-citrulline + phosphate + H(+). It functions in the pathway amino-acid biosynthesis; L-arginine biosynthesis; L-arginine from L-ornithine and carbamoyl phosphate: step 1/3. Functionally, reversibly catalyzes the transfer of the carbamoyl group from carbamoyl phosphate (CP) to the N(epsilon) atom of ornithine (ORN) to produce L-citrulline. The polypeptide is Ornithine carbamoyltransferase (argF) (Neisseria polysaccharea).